We begin with the raw amino-acid sequence, 236 residues long: Purine nucleoside phosphorylase DeoD-type (236 aa).

Position 5 (histidine 5) interacts with a purine D-ribonucleoside. Residues glycine 21, arginine 25, arginine 44, and 88–91 each bind phosphate; that span reads RVGT. A purine D-ribonucleoside contacts are provided by residues 180 to 182 and 204 to 205; these read EME and SD. The Proton donor role is filled by aspartate 205.

This sequence belongs to the PNP/UDP phosphorylase family. Homohexamer; trimer of homodimers.

It carries out the reaction a purine D-ribonucleoside + phosphate = a purine nucleobase + alpha-D-ribose 1-phosphate. It catalyses the reaction a purine 2'-deoxy-D-ribonucleoside + phosphate = a purine nucleobase + 2-deoxy-alpha-D-ribose 1-phosphate. Functionally, catalyzes the reversible phosphorolytic breakdown of the N-glycosidic bond in the beta-(deoxy)ribonucleoside molecules, with the formation of the corresponding free purine bases and pentose-1-phosphate. In Shewanella baltica (strain OS223), this protein is Purine nucleoside phosphorylase DeoD-type.